We begin with the raw amino-acid sequence, 737 residues long: NAD-dependent protein deacetylase sirtuin-1 (737 aa).

Residues 1–28 (MADEVALALQAAGSPSAAAAMEAASQPA) show a composition bias toward low complexity. 2 disordered regions span residues 1-56 (MADE…AVAP) and 75-125 (EAAG…EAAA). Ala2 carries the N-acetylalanine modification. The segment at 2 to 131 (ADEVALALQA…EAAAAAAAAA (130 aa)) is interaction with CLOCK. Positions 2-268 (ADEVALALQA…SCGIPDFRSR (267 aa)) are interaction with H1-4. Phosphoserine occurs at positions 14 and 25. Residues 32–39 (LRKRPRRD) carry the Nuclear localization signal motif. Ser46 is modified (phosphoserine; by MAPK8). 2 stretches are compositionally biased toward low complexity: residues 46-56 (SPGEPSAAVAP) and 75-94 (EAAG…AVAG). The span at 111 to 123 (DFDDDEGEEEDEA) shows a compositional bias: acidic residues. Residues 135 to 533 (RDNLLLTDGL…LHISEDSSSP (399 aa)) form an interaction with CCAR2 region. The Nuclear export signal motif lies at 138-145 (LLLTDGLL). Phosphoserine occurs at positions 151, 154, 164, and 165. The interval 152-171 (CESDDDDRTSHASSSDWTPR) is disordered. Residues 223 to 230 (PPKRKKRK) carry the Nuclear localization signal motif. The 261-residue stretch at 228 to 488 (KRKDINTIED…NELCHRLGGE (261 aa)) folds into the Deacetylase sirtuin-type domain. N6-acetyllysine is present on Lys230. Residues 248-251 (IIVL) form a required for interaction with the sumoylated form of CCAR2 region. Residues 253–272 (GAGV…DGIY) and 337–340 (QNID) each bind NAD(+). The Proton acceptor role is filled by His355. Zn(2+) contacts are provided by Cys363 and Cys366. Lys369 is subject to N6-acetyllysine. The Zn(2+) site is built by Cys387 and Cys390. S-nitrosocysteine occurs at positions 387 and 390. Lys422 is modified (N6-acetyllysine). The Nuclear export signal signature appears at 425–431 (VDLLIVI). NAD(+) contacts are provided by residues 432 to 434 (GSS), 457 to 459 (NRE), and Cys474. Lys505 is subject to N6-acetyllysine. The interval 514–539 (VHLSELPPTPLHISEDSSSPERTVPQ) is disordered. Thr522 carries the phosphothreonine; by DYRK1A, DYRK3 and MAPK8 modification. At Ser527 the chain carries Phosphoserine. Over residues 529–539 (DSSSPERTVPQ) the composition is skewed to polar residues. Thr536 is subject to Phosphothreonine. An N6-acetyllysine modification is found at Lys600. Ser649 and Ser651 each carry phosphoserine; by CaMK2. The tract at residues 653–713 (DDVLSSSSCG…GSGFGADGGD (61 aa)) is disordered. Residues 656-676 (LSSSSCGSNSDSGTCQSPSLE) are compositionally biased toward low complexity. A compositionally biased stretch (acidic residues) spans 677–697 (EPLEDESEIEEFYNGLEDDTE). Phosphoserine is present on Ser737.

It belongs to the sirtuin family. Class I subfamily. In terms of assembly, interacts with XBP1 isoform 2. Found in a complex with PCAF and MYOD1 Component of the eNoSC complex, composed of SIRT1, SUV39H1 and RRP8. Interacts with HES1, HEY2 and PML. Interacts with RPS19BP1/AROS. Interacts with CCAR2 (via N-terminus); the interaction disrupts the interaction between SIRT1 and p53/TP53. Interacts with SETD7; the interaction induces the dissociation of SIRT1 from p53/TP53 and increases p53/TP53 activity. Interacts with MYCN, NR1I2, CREBZF, TSC2, TLE1, FOS, JUN, NR0B2, PPARG, NCOR, IRS1, IRS2 and NMNAT1. Interacts with HNF1A; the interaction occurs under nutrient restriction. Interacts with SUZ12; the interaction mediates the association with the PRC4 histone methylation complex which is specific as an association with PCR2 and PCR3 complex variants is not found. Interacts with FOXO1; the interaction deacetylates FOXO1, enhances its DNA-binding ability and increases its transcriptional activity. Interacts with BCL6; leads to a epigenetic repression of specific target genes. Interacts with CLOCK, BMAL1 and PER2. Interacts with PPARA; the interaction seems to be modulated by NAD(+) levels. Interacts with NR1H3 and this interaction is inhibited in the presence of CCAR2. Interacts with CHEK2 and p53/TP53. Exhibits a preferential interaction with sumoylated CCAR2 over its unmodified form. Interacts with PACS2. Interacts with SIRT7. Interacts with PUS7. Interacts with TULP3. Interacts with MORN3; the interaction enhances the ubiquitination of p53/TP53. Zn(2+) serves as cofactor. Methylated on multiple lysine residues; methylation is enhanced after DNA damage and is dispensable for deacetylase activity toward p53/TP53. In terms of processing, phosphorylated. Phosphorylated by STK4/MST1, resulting in inhibition of SIRT1-mediated p53/TP53 deacetylation. Phosphorylation by MAPK8/JNK1 at Ser-46 and Thr-522 leads to increased nuclear localization and enzymatic activity. Phosphorylation at Thr-522 by DYRK1A and DYRK3 activates deacetylase activity and promotes cell survival. Phosphorylation by mammalian target of rapamycin complex 1 (mTORC1) at Ser-46 inhibits deacetylation activity. Phosphorylated by CaMK2, leading to increased p53/TP53 and NF-kappa-B p65/RELA deacetylation activity. Post-translationally, proteolytically cleaved by cathepsin B upon TNF-alpha treatment to yield catalytic inactive but stable SirtT1 75 kDa fragment (75SirT1). S-nitrosylated by GAPDH, leading to inhibit the NAD-dependent protein deacetylase activity. In terms of processing, acetylated at various Lys residues. Deacetylated via an autocatalytic mechanism. Autodeacetylation at Lys-230 promotes its protein deacetylase activity. Post-translationally, ubiquitinated; leading to degradation. Deubiquitinated by USP22; leading to stabilization. Widely expressed. Weakly expressed in liver and skeletal muscle.

Its subcellular location is the nucleus. It is found in the PML body. It localises to the cytoplasm. The protein localises to the mitochondrion. The enzyme catalyses N(6)-acetyl-L-lysyl-[protein] + NAD(+) + H2O = 2''-O-acetyl-ADP-D-ribose + nicotinamide + L-lysyl-[protein]. It catalyses the reaction N(6)-propanoyl-L-lysyl-[protein] + NAD(+) + H2O = 3''-O-propanoyl-ADP-D-ribose + nicotinamide + L-lysyl-[protein]. It carries out the reaction N(6)-(2E)-butenoyl-L-lysyl-[protein] + NAD(+) + H2O = 2''-O-(2E)-but-2-enoyl-ADP-D-ribose + nicotinamide + L-lysyl-[protein]. The catalysed reaction is N(6)-[(S)-lactoyl]-L-lysyl-[protein] + NAD(+) + H2O = 2''-O-(S)-lactoyl-ADP-D-ribose + nicotinamide + L-lysyl-[protein]. With respect to regulation, activated by resveratrol (3,5,4'-trihydroxy-trans-stilbene), butein (3,4,2',4'-tetrahydroxychalcone), piceatannol (3,5,3',4'-tetrahydroxy-trans-stilbene), Isoliquiritigenin (4,2',4'-trihydroxychalcone), fisetin (3,7,3',4'-tetrahydroxyflavone) and quercetin (3,5,7,3',4'-pentahydroxyflavone). MAPK8/JNK1 and RPS19BP1/AROS act as positive regulators of deacetylation activity. Inhibited by nicotinamide. Negatively regulated by CCAR2. In terms of biological role, NAD-dependent protein deacetylase that links transcriptional regulation directly to intracellular energetics and participates in the coordination of several separated cellular functions such as cell cycle, response to DNA damage, metabolism, apoptosis and autophagy. Can modulate chromatin function through deacetylation of histones and can promote alterations in the methylation of histones and DNA, leading to transcriptional repression. Deacetylates a broad range of transcription factors and coregulators, thereby regulating target gene expression positively and negatively. Serves as a sensor of the cytosolic ratio of NAD(+)/NADH which is altered by glucose deprivation and metabolic changes associated with caloric restriction. Is essential in skeletal muscle cell differentiation and in response to low nutrients mediates the inhibitory effect on skeletal myoblast differentiation which also involves 5'-AMP-activated protein kinase (AMPK) and nicotinamide phosphoribosyltransferase (NAMPT). Component of the eNoSC (energy-dependent nucleolar silencing) complex, a complex that mediates silencing of rDNA in response to intracellular energy status and acts by recruiting histone-modifying enzymes. The eNoSC complex is able to sense the energy status of cell: upon glucose starvation, elevation of NAD(+)/NADP(+) ratio activates SIRT1, leading to histone H3 deacetylation followed by dimethylation of H3 at 'Lys-9' (H3K9me2) by SUV39H1 and the formation of silent chromatin in the rDNA locus. Deacetylates 'Lys-266' of SUV39H1, leading to its activation. Inhibits skeletal muscle differentiation by deacetylating PCAF and MYOD1. Deacetylates H2A and 'Lys-26' of H1-4. Deacetylates 'Lys-16' of histone H4 (in vitro). Involved in NR0B2/SHP corepression function through chromatin remodeling: Recruited to LRH1 target gene promoters by NR0B2/SHP thereby stimulating histone H3 and H4 deacetylation leading to transcriptional repression. Proposed to contribute to genomic integrity via positive regulation of telomere length; however, reports on localization to pericentromeric heterochromatin are conflicting. Proposed to play a role in constitutive heterochromatin (CH) formation and/or maintenance through regulation of the available pool of nuclear SUV39H1. Upon oxidative/metabolic stress decreases SUV39H1 degradation by inhibiting SUV39H1 polyubiquitination by MDM2. This increase in SUV39H1 levels enhances SUV39H1 turnover in CH, which in turn seems to accelerate renewal of the heterochromatin which correlates with greater genomic integrity during stress response. Deacetylates 'Lys-382' of p53/TP53 and impairs its ability to induce transcription-dependent proapoptotic program and modulate cell senescence. Deacetylates TAF1B and thereby represses rDNA transcription by the RNA polymerase I. Deacetylates MYC, promotes the association of MYC with MAX and decreases MYC stability leading to compromised transformational capability. Deacetylates FOXO3 in response to oxidative stress thereby increasing its ability to induce cell cycle arrest and resistance to oxidative stress but inhibiting FOXO3-mediated induction of apoptosis transcriptional activity; also leading to FOXO3 ubiquitination and protesomal degradation. Appears to have a similar effect on MLLT7/FOXO4 in regulation of transcriptional activity and apoptosis. Deacetylates DNMT1; thereby impairs DNMT1 methyltransferase-independent transcription repressor activity, modulates DNMT1 cell cycle regulatory function and DNMT1-mediated gene silencing. Deacetylates RELA/NF-kappa-B p65 thereby inhibiting its transactivating potential and augments apoptosis in response to TNF-alpha. Deacetylates HIF1A, KAT5/TIP60, RB1 and HIC1. Deacetylates FOXO1, which increases its DNA binding ability and enhances its transcriptional activity leading to increased gluconeogenesis in liver. Inhibits E2F1 transcriptional activity and apoptotic function, possibly by deacetylation. Involved in HES1- and HEY2-mediated transcriptional repression. In cooperation with MYCN seems to be involved in transcriptional repression of DUSP6/MAPK3 leading to MYCN stabilization by phosphorylation at 'Ser-62'. Deacetylates MEF2D. Required for antagonist-mediated transcription suppression of AR-dependent genes which may be linked to local deacetylation of histone H3. Represses HNF1A-mediated transcription. Required for the repression of ESRRG by CREBZF. Deacetylates NR1H3 and NR1H2 and deacetylation of NR1H3 at 'Lys-434' positively regulates transcription of NR1H3:RXR target genes, promotes NR1H3 proteasomal degradation and results in cholesterol efflux; a promoter clearing mechanism after reach round of transcription is proposed. Involved in lipid metabolism: deacetylates LPIN1, thereby inhibiting diacylglycerol synthesis. Implicated in regulation of adipogenesis and fat mobilization in white adipocytes by repression of PPARG which probably involves association with NCOR1 and SMRT/NCOR2. Deacetylates p300/EP300 and PRMT1. Deacetylates ACSS2 leading to its activation, and HMGCS1 deacetylation. Involved in liver and muscle metabolism. Through deacetylation and activation of PPARGC1A is required to activate fatty acid oxidation in skeletal muscle under low-glucose conditions and is involved in glucose homeostasis. Involved in regulation of PPARA and fatty acid beta-oxidation in liver. Involved in positive regulation of insulin secretion in pancreatic beta cells in response to glucose; the function seems to imply transcriptional repression of UCP2. Proposed to deacetylate IRS2 thereby facilitating its insulin-induced tyrosine phosphorylation. Deacetylates SREBF1 isoform SREBP-1C thereby decreasing its stability and transactivation in lipogenic gene expression. Involved in DNA damage response by repressing genes which are involved in DNA repair, such as XPC and TP73, deacetylating XRCC6/Ku70, and facilitating recruitment of additional factors to sites of damaged DNA, such as SIRT1-deacetylated NBN can recruit ATM to initiate DNA repair and SIRT1-deacetylated XPA interacts with RPA2. Also involved in DNA repair of DNA double-strand breaks by homologous recombination and specifically single-strand annealing independently of XRCC6/Ku70 and NBN. Promotes DNA double-strand breaks by mediating deacetylation of SIRT6. Transcriptional suppression of XPC probably involves an E2F4:RBL2 suppressor complex and protein kinase B (AKT) signaling. Transcriptional suppression of TP73 probably involves E2F4 and PCAF. Deacetylates WRN thereby regulating its helicase and exonuclease activities and regulates WRN nuclear translocation in response to DNA damage. Deacetylates APEX1 at 'Lys-6' and 'Lys-7' and stimulates cellular AP endonuclease activity by promoting the association of APEX1 to XRCC1. Catalyzes deacetylation of ERCC4/XPF, thereby impairing interaction with ERCC1 and nucleotide excision repair (NER). Increases p53/TP53-mediated transcription-independent apoptosis by blocking nuclear translocation of cytoplasmic p53/TP53 and probably redirecting it to mitochondria. Deacetylates XRCC6/Ku70 at 'Lys-537' and 'Lys-540' causing it to sequester BAX away from mitochondria thereby inhibiting stress-induced apoptosis. Is involved in autophagy, presumably by deacetylating ATG5, ATG7 and MAP1LC3B/ATG8. Deacetylates AKT1 which leads to enhanced binding of AKT1 and PDK1 to PIP3 and promotes their activation. Proposed to play role in regulation of STK11/LBK1-dependent AMPK signaling pathways implicated in cellular senescence which seems to involve the regulation of the acetylation status of STK11/LBK1. Can deacetylate STK11/LBK1 and thereby increase its activity, cytoplasmic localization and association with STRAD; however, the relevance of such activity in normal cells is unclear. In endothelial cells is shown to inhibit STK11/LBK1 activity and to promote its degradation. Deacetylates SMAD7 at 'Lys-64' and 'Lys-70' thereby promoting its degradation. Deacetylates CIITA and augments its MHC class II transactivation and contributes to its stability. Deacetylates MECOM/EVI1. Deacetylates PML at 'Lys-487' and this deacetylation promotes PML control of PER2 nuclear localization. During the neurogenic transition, represses selective NOTCH1-target genes through histone deacetylation in a BCL6-dependent manner and leading to neuronal differentiation. Regulates the circadian expression of several core clock genes, including BMAL1, RORC, PER2 and CRY1 and plays a critical role in maintaining a controlled rhythmicity in histone acetylation, thereby contributing to circadian chromatin remodeling. Deacetylates BMAL1 and histones at the circadian gene promoters in order to facilitate repression by inhibitory components of the circadian oscillator. Deacetylates PER2, facilitating its ubiquitination and degradation by the proteasome. Protects cardiomyocytes against palmitate-induced apoptosis. Deacetylates XBP1 isoform 2; deacetylation decreases protein stability of XBP1 isoform 2 and inhibits its transcriptional activity. Deacetylates PCK1 and directs its activity toward phosphoenolpyruvate production promoting gluconeogenesis. Involved in the CCAR2-mediated regulation of PCK1 and NR1D1. Deacetylates CTNB1 at 'Lys-49'. In POMC (pro-opiomelanocortin) neurons, required for leptin-induced activation of PI3K signaling. Deacetylates SOX9; promoting SOX9 nuclear localization and transactivation activity. Involved in the regulation of centrosome duplication: Deacetylates CENATAC in G1 phase, allowing for SASS6 accumulation on the centrosome and subsequent procentriole assembly. Deacetylates NDC80/HEC1. In addition to protein deacetylase activity, also acts as a protein-lysine deacylase by mediating protein delactylation, depropionylation and decrotonylation. Mediates depropionylation of Osterix (SP7). Catalyzes decrotonylation of histones; it however does not represent a major histone decrotonylase. Mediates protein delactylation of TEAD1 and YAP1. Functionally, deacetylates 'Lys-382' of p53/TP53, however with lower activity than isoform 1. In combination, the two isoforms exert an additive effect. Isoform 2 regulates p53/TP53 expression and cellular stress response and is in turn repressed by p53/TP53 presenting a SIRT1 isoform-dependent auto-regulatory loop. Its function is as follows. Catalytically inactive 75SirT1 may be involved in regulation of apoptosis. May be involved in protecting chondrocytes from apoptotic death by associating with cytochrome C and interfering with apoptosome assembly. This chain is NAD-dependent protein deacetylase sirtuin-1 (Sirt1), found in Mus musculus (Mouse).